The chain runs to 382 residues: Lipid-A-disaccharide synthase (382 aa).

It belongs to the LpxB family.

It catalyses the reaction 2-N,3-O-bis[(3R)-3-hydroxytetradecanoyl]-alpha-D-glucosaminyl 1-phosphate + UDP-2-N,3-O-bis[(3R)-3-hydroxytetradecanoyl]-alpha-D-glucosamine = lipid A disaccharide (E. coli) + UDP + H(+). It carries out the reaction a lipid X + a UDP-2-N,3-O-bis[(3R)-3-hydroxyacyl]-alpha-D-glucosamine = a lipid A disaccharide + UDP + H(+). It functions in the pathway glycolipid biosynthesis; lipid IV(A) biosynthesis; lipid IV(A) from (3R)-3-hydroxytetradecanoyl-[acyl-carrier-protein] and UDP-N-acetyl-alpha-D-glucosamine: step 5/6. Condensation of UDP-2,3-diacylglucosamine and 2,3-diacylglucosamine-1-phosphate to form lipid A disaccharide, a precursor of lipid A, a phosphorylated glycolipid that anchors the lipopolysaccharide to the outer membrane of the cell. The protein is Lipid-A-disaccharide synthase of Enterobacter sp. (strain 638).